The primary structure comprises 143 residues: Translation initiation factor 2 subunit beta (143 aa).

The protein belongs to the eIF-2-beta/eIF-5 family. Heterotrimer composed of an alpha, a beta and a gamma chain.

EIF-2 functions in the early steps of protein synthesis by forming a ternary complex with GTP and initiator tRNA. This chain is Translation initiation factor 2 subunit beta (eif2b), found in Methanocaldococcus jannaschii (strain ATCC 43067 / DSM 2661 / JAL-1 / JCM 10045 / NBRC 100440) (Methanococcus jannaschii).